The sequence spans 950 residues: 2-oxoglutarate dehydrogenase E1 component (950 aa).

It belongs to the alpha-ketoglutarate dehydrogenase family. Homodimer. Part of the 2-oxoglutarate dehydrogenase (OGDH) complex composed of E1 (2-oxoglutarate dehydrogenase), E2 (dihydrolipoamide succinyltransferase) and E3 (dihydrolipoamide dehydrogenase); the complex contains multiple copies of the three enzymatic components (E1, E2 and E3). It depends on thiamine diphosphate as a cofactor.

The enzyme catalyses N(6)-[(R)-lipoyl]-L-lysyl-[protein] + 2-oxoglutarate + H(+) = N(6)-[(R)-S(8)-succinyldihydrolipoyl]-L-lysyl-[protein] + CO2. Its function is as follows. E1 component of the 2-oxoglutarate dehydrogenase (OGDH) complex which catalyzes the decarboxylation of 2-oxoglutarate, the first step in the conversion of 2-oxoglutarate to succinyl-CoA and CO(2). This chain is 2-oxoglutarate dehydrogenase E1 component, found in Geobacillus kaustophilus (strain HTA426).